A 73-amino-acid polypeptide reads, in one-letter code: Disintegrin cerastin (73 aa).

The 73-residue stretch at 1-73 folds into the Disintegrin domain; that stretch reads EAGEECDCGT…ADCPRNGLYG (73 aa). Disulfide bonds link Cys6/Cys21, Cys8/Cys16, Cys15/Cys38, Cys29/Cys35, Cys34/Cys59, and Cys47/Cys66. The Cell attachment site signature appears at 51 to 53; it reads RGD.

Belongs to the venom metalloproteinase (M12B) family. P-II subfamily. P-IIa sub-subfamily. In terms of assembly, monomer (disintegrin). As to expression, expressed by the venom gland.

Its subcellular location is the secreted. Its function is as follows. Inhibits fibrinogen interaction with platelets. Acts by binding to alpha-IIb/beta-3 (ITGA2B/ITGB3) on the platelet surface and inhibits aggregation induced by ADP, thrombin, platelet-activating factor and collagen. This Crotalus cerastes cerastes (Mojave desert sidewinder) protein is Disintegrin cerastin.